We begin with the raw amino-acid sequence, 102 residues long: Large ribosomal subunit protein bL21 (102 aa).

It belongs to the bacterial ribosomal protein bL21 family. In terms of assembly, part of the 50S ribosomal subunit. Contacts protein L20.

This protein binds to 23S rRNA in the presence of protein L20. In Listeria monocytogenes serotype 4b (strain CLIP80459), this protein is Large ribosomal subunit protein bL21.